A 705-amino-acid polypeptide reads, in one-letter code: Elongation factor G (705 aa).

The tr-type G domain occupies 8 to 294; the sequence is DRYRNFGIMA…AVIDYLPSPL (287 aa). GTP contacts are provided by residues 17–24, 92–96, and 146–149; these read AHIDAGKT, DTPGH, and NKMD.

Belongs to the TRAFAC class translation factor GTPase superfamily. Classic translation factor GTPase family. EF-G/EF-2 subfamily.

The protein localises to the cytoplasm. In terms of biological role, catalyzes the GTP-dependent ribosomal translocation step during translation elongation. During this step, the ribosome changes from the pre-translocational (PRE) to the post-translocational (POST) state as the newly formed A-site-bound peptidyl-tRNA and P-site-bound deacylated tRNA move to the P and E sites, respectively. Catalyzes the coordinated movement of the two tRNA molecules, the mRNA and conformational changes in the ribosome. The protein is Elongation factor G of Dinoroseobacter shibae (strain DSM 16493 / NCIMB 14021 / DFL 12).